The sequence spans 336 residues: Biotin synthase (336 aa).

The 228-residue stretch at asparagine 54–arginine 281 folds into the Radical SAM core domain. [4Fe-4S] cluster contacts are provided by cysteine 69, cysteine 73, and cysteine 76. The [2Fe-2S] cluster site is built by cysteine 113, cysteine 144, cysteine 204, and arginine 276.

This sequence belongs to the radical SAM superfamily. Biotin synthase family. In terms of assembly, homodimer. It depends on [4Fe-4S] cluster as a cofactor. The cofactor is [2Fe-2S] cluster.

The enzyme catalyses (4R,5S)-dethiobiotin + (sulfur carrier)-SH + 2 reduced [2Fe-2S]-[ferredoxin] + 2 S-adenosyl-L-methionine = (sulfur carrier)-H + biotin + 2 5'-deoxyadenosine + 2 L-methionine + 2 oxidized [2Fe-2S]-[ferredoxin]. It participates in cofactor biosynthesis; biotin biosynthesis; biotin from 7,8-diaminononanoate: step 2/2. Catalyzes the conversion of dethiobiotin (DTB) to biotin by the insertion of a sulfur atom into dethiobiotin via a radical-based mechanism. This Burkholderia pseudomallei (strain 1106a) protein is Biotin synthase.